The following is a 155-amino-acid chain: SsrA-binding protein (155 aa).

Basic and acidic residues predominate over residues 127-149 (KKDYDKRNDMRKKEAKREMERTF). The disordered stretch occupies residues 127-155 (KKDYDKRNDMRKKEAKREMERTFKSKNQY).

This sequence belongs to the SmpB family.

It is found in the cytoplasm. In terms of biological role, required for rescue of stalled ribosomes mediated by trans-translation. Binds to transfer-messenger RNA (tmRNA), required for stable association of tmRNA with ribosomes. tmRNA and SmpB together mimic tRNA shape, replacing the anticodon stem-loop with SmpB. tmRNA is encoded by the ssrA gene; the 2 termini fold to resemble tRNA(Ala) and it encodes a 'tag peptide', a short internal open reading frame. During trans-translation Ala-aminoacylated tmRNA acts like a tRNA, entering the A-site of stalled ribosomes, displacing the stalled mRNA. The ribosome then switches to translate the ORF on the tmRNA; the nascent peptide is terminated with the 'tag peptide' encoded by the tmRNA and targeted for degradation. The ribosome is freed to recommence translation, which seems to be the essential function of trans-translation. The protein is SsrA-binding protein of Lysinibacillus sphaericus (strain C3-41).